The following is a 283-amino-acid chain: Shikimate dehydrogenase (NADP(+)) (283 aa).

Residues Ser-16 to Ser-18 and Thr-63 contribute to the shikimate site. The active-site Proton acceptor is the Lys-67. Asp-79 contacts NADP(+). Asn-88 and Asp-103 together coordinate shikimate. NADP(+) is bound by residues Gly-128–Ala-132, Ala-223, and Gly-243.

It belongs to the shikimate dehydrogenase family. As to quaternary structure, homodimer.

The catalysed reaction is shikimate + NADP(+) = 3-dehydroshikimate + NADPH + H(+). It participates in metabolic intermediate biosynthesis; chorismate biosynthesis; chorismate from D-erythrose 4-phosphate and phosphoenolpyruvate: step 4/7. Functionally, involved in the biosynthesis of the chorismate, which leads to the biosynthesis of aromatic amino acids. Catalyzes the reversible NADPH linked reduction of 3-dehydroshikimate (DHSA) to yield shikimate (SA). This chain is Shikimate dehydrogenase (NADP(+)), found in Xanthomonas campestris pv. campestris (strain 8004).